Reading from the N-terminus, the 377-residue chain is tRNA(Met) cytidine acetate ligase (377 aa).

ATP contacts are provided by residues 7 to 20 (ITEY…HLYH), glycine 101, asparagine 152, and arginine 179.

This sequence belongs to the TmcAL family.

It localises to the cytoplasm. It catalyses the reaction cytidine(34) in elongator tRNA(Met) + acetate + ATP = N(4)-acetylcytidine(34) in elongator tRNA(Met) + AMP + diphosphate. In terms of biological role, catalyzes the formation of N(4)-acetylcytidine (ac(4)C) at the wobble position of elongator tRNA(Met), using acetate and ATP as substrates. First activates an acetate ion to form acetyladenylate (Ac-AMP) and then transfers the acetyl group to tRNA to form ac(4)C34. The polypeptide is tRNA(Met) cytidine acetate ligase (Oenococcus oeni (strain ATCC BAA-331 / PSU-1)).